The primary structure comprises 415 residues: Casein kinase 1-like protein 3 (415 aa).

One can recognise a Protein kinase domain in the interval 9–277 (YKLGRKIGGG…FLKRLFRDLF (269 aa)). ATP is bound by residues 15-23 (IGGGSFGEI) and K38. The active-site Proton acceptor is the D128. 2 stretches are compositionally biased toward polar residues: residues 303–314 (NQSQAVPGSSNP) and 373–415 (NMPS…SPEK). Disordered stretches follow at residues 303 to 330 (NQSQ…GPNI) and 344 to 415 (NAIG…SPEK).

The protein belongs to the protein kinase superfamily. CK1 Ser/Thr protein kinase family. Casein kinase I subfamily. Slightly autophosphorylated. Expressed in seedlings, stems, leaves and flowers.

The protein resides in the cytoplasm. The protein localises to the nucleus. It carries out the reaction L-seryl-[protein] + ATP = O-phospho-L-seryl-[protein] + ADP + H(+). The enzyme catalyses L-threonyl-[protein] + ATP = O-phospho-L-threonyl-[protein] + ADP + H(+). Protein kinase involved in blue light responses (e.g. hypocotyl elongation and flowering) by phosphorylating CRY2 to reduce its stability. In Arabidopsis thaliana (Mouse-ear cress), this protein is Casein kinase 1-like protein 3.